Reading from the N-terminus, the 253-residue chain is Transcriptional regulatory protein TcrA (253 aa).

The region spanning 24–138 (RILVVEDEPK…ELFARLRALS (115 aa)) is the Response regulatory domain. The residue at position 73 (aspartate 73) is a 4-aspartylphosphate. A DNA-binding region (ompR/PhoB-type) is located at residues 146–244 (PPTLEAGDLR…IRGAGYRLRK (99 aa)).

Interacts with HK2. Post-translationally, phosphorylated by HK2.

Its subcellular location is the cytoplasm. Functionally, member of the three-protein two-component system HK1/HK2/TcrA. The sequence is that of Transcriptional regulatory protein TcrA (tcrA) from Mycobacterium tuberculosis (strain ATCC 25618 / H37Rv).